A 115-amino-acid chain; its full sequence is Iron-sulfur cluster insertion protein ErpA (115 aa).

Positions 42, 106, and 108 each coordinate iron-sulfur cluster.

Belongs to the HesB/IscA family. As to quaternary structure, homodimer. Iron-sulfur cluster is required as a cofactor.

Functionally, required for insertion of 4Fe-4S clusters for at least IspG. In Baumannia cicadellinicola subsp. Homalodisca coagulata, this protein is Iron-sulfur cluster insertion protein ErpA.